A 211-amino-acid chain; its full sequence is Redox-sensing transcriptional repressor Rex (211 aa).

The H-T-H motif DNA-binding region spans 17–56; the sequence is KYHRYLEELMKNEVDRISSKELGEKIGFTASQIRQDLNCF. Residue 91–96 coordinates NAD(+); the sequence is GAGNIG.

This sequence belongs to the transcriptional regulatory Rex family. As to quaternary structure, homodimer.

It localises to the cytoplasm. Functionally, modulates transcription in response to changes in cellular NADH/NAD(+) redox state. This is Redox-sensing transcriptional repressor Rex from Clostridium beijerinckii (strain ATCC 51743 / NCIMB 8052) (Clostridium acetobutylicum).